Here is a 187-residue protein sequence, read N- to C-terminus: MSDEIEIDTDDLERRMKGAMESLRHEFASLRTGRASASMVEPIMVDAYGSPTPINQIGTVNVPEPRMVTINIWDKGLVGKAEKAIRESGLGINPQLNGTIIMLPIPELNEERRRELTRVAAQYAEHARVAIRNVRRDGMDQIKKAKSSGMSEDDQKFWEGAVQELTDKMIASVDQALEAKQAEIMQV.

It belongs to the RRF family.

The protein resides in the cytoplasm. Its function is as follows. Responsible for the release of ribosomes from messenger RNA at the termination of protein biosynthesis. May increase the efficiency of translation by recycling ribosomes from one round of translation to another. The polypeptide is Ribosome-recycling factor (Paracoccus denitrificans (strain Pd 1222)).